A 58-amino-acid polypeptide reads, in one-letter code: ATP synthase F(0) complex subunit k, mitochondrial (58 aa).

An N6-acetyllysine mark is found at K16 and K17. The helical transmembrane segment at 23–45 (TLTGRMNCVLATYGGIALLVLYF) threads the bilayer.

Component of the ATP synthase complex composed at least of ATP5F1A/subunit alpha, ATP5F1B/subunit beta, ATP5MC1/subunit c (homooctomer), MT-ATP6/subunit a, MT-ATP8/subunit 8, ATP5ME/subunit e, ATP5MF/subunit f, ATP5MG/subunit g, ATP5MK/subunit k, ATP5MJ/subunit j, ATP5F1C/subunit gamma, ATP5F1D/subunit delta, ATP5F1E/subunit epsilon, ATP5PF/subunit F6, ATP5PB/subunit b, ATP5PD/subunit d, ATP5PO/subunit OSCP. ATP synthase complex consists of a soluble F(1) head domain (subunits alpha(3) and beta(3)) - the catalytic core - and a membrane F(0) domain - the membrane proton channel (subunits c, a, 8, e, f, g, k and j). These two domains are linked by a central stalk (subunits gamma, delta, and epsilon) rotating inside the F1 region and a stationary peripheral stalk (subunits F6, b, d, and OSCP). The ATP synthase complex/complex V exists as a monomeric and a dimeric supercomplex that helps shape mitochondrial cristae to optimize proton flow.

The protein resides in the mitochondrion membrane. Its function is as follows. Subunit k, of the mitochondrial membrane ATP synthase complex (F(1)F(0) ATP synthase or Complex V) that produces ATP from ADP in the presence of a proton gradient across the membrane which is generated by electron transport complexes of the respiratory chain. ATP synthase complex consist of a soluble F(1) head domain - the catalytic core - and a membrane F(1) domain - the membrane proton channel. These two domains are linked by a central stalk rotating inside the F(1) region and a stationary peripheral stalk. During catalysis, ATP synthesis in the catalytic domain of F(1) is coupled via a rotary mechanism of the central stalk subunits to proton translocation. In vivo, can only synthesize ATP although its ATP hydrolase activity can be activated artificially in vitro. Part of the complex F(0) domain. Required for dimerization of the ATP synthase complex and as such regulates ATP synthesis in the mitochondria. The sequence is that of ATP synthase F(0) complex subunit k, mitochondrial from Mus musculus (Mouse).